The following is a 92-amino-acid chain: Small ribosomal subunit protein uS19 (92 aa).

It belongs to the universal ribosomal protein uS19 family.

Functionally, protein S19 forms a complex with S13 that binds strongly to the 16S ribosomal RNA. The chain is Small ribosomal subunit protein uS19 from Exiguobacterium sibiricum (strain DSM 17290 / CCUG 55495 / CIP 109462 / JCM 13490 / 255-15).